We begin with the raw amino-acid sequence, 503 residues long: ATP synthase subunit alpha (503 aa).

169–176 (GDRSTGKT) lines the ATP pocket.

The protein belongs to the ATPase alpha/beta chains family. In terms of assembly, F-type ATPases have 2 components, CF(1) - the catalytic core - and CF(0) - the membrane proton channel. CF(1) has five subunits: alpha(3), beta(3), gamma(1), delta(1), epsilon(1). CF(0) has three main subunits: a(1), b(2) and c(9-12). The alpha and beta chains form an alternating ring which encloses part of the gamma chain. CF(1) is attached to CF(0) by a central stalk formed by the gamma and epsilon chains, while a peripheral stalk is formed by the delta and b chains.

The protein resides in the cell membrane. The enzyme catalyses ATP + H2O + 4 H(+)(in) = ADP + phosphate + 5 H(+)(out). Functionally, produces ATP from ADP in the presence of a proton gradient across the membrane. The alpha chain is a regulatory subunit. The protein is ATP synthase subunit alpha of Dehalococcoides mccartyi (strain ATCC BAA-2100 / JCM 16839 / KCTC 5957 / BAV1).